Here is a 244-residue protein sequence, read N- to C-terminus: Dirigent protein 18 (244 aa).

A signal peptide spans 1–25 (MMKQSPFSLLTSIFLIAALFTATTA).

This sequence belongs to the plant dirigent protein family. As to quaternary structure, homodimer.

Its subcellular location is the secreted. The protein localises to the extracellular space. It is found in the apoplast. Dirigent proteins impart stereoselectivity on the phenoxy radical-coupling reaction, yielding optically active lignans from two molecules of coniferyl alcohol in the biosynthesis of lignans, flavonolignans, and alkaloids and thus plays a central role in plant secondary metabolism. The protein is Dirigent protein 18 (DIR18) of Arabidopsis thaliana (Mouse-ear cress).